Consider the following 179-residue polypeptide: Large ribosomal subunit protein uL5 (179 aa).

It belongs to the universal ribosomal protein uL5 family. As to quaternary structure, part of the 50S ribosomal subunit; part of the 5S rRNA/L5/L18/L25 subcomplex. Contacts the 5S rRNA and the P site tRNA. Forms a bridge to the 30S subunit in the 70S ribosome.

In terms of biological role, this is one of the proteins that bind and probably mediate the attachment of the 5S RNA into the large ribosomal subunit, where it forms part of the central protuberance. In the 70S ribosome it contacts protein S13 of the 30S subunit (bridge B1b), connecting the 2 subunits; this bridge is implicated in subunit movement. Contacts the P site tRNA; the 5S rRNA and some of its associated proteins might help stabilize positioning of ribosome-bound tRNAs. In Shewanella piezotolerans (strain WP3 / JCM 13877), this protein is Large ribosomal subunit protein uL5.